The following is a 632-amino-acid chain: 1,4-alpha-glucan branching enzyme GlgB (632 aa).

D310 functions as the Nucleophile in the catalytic mechanism. E363 functions as the Proton donor in the catalytic mechanism.

This sequence belongs to the glycosyl hydrolase 13 family. GlgB subfamily. In terms of assembly, monomer.

It carries out the reaction Transfers a segment of a (1-&gt;4)-alpha-D-glucan chain to a primary hydroxy group in a similar glucan chain.. It participates in glycan biosynthesis; glycogen biosynthesis. Functionally, catalyzes the formation of the alpha-1,6-glucosidic linkages in glycogen by scission of a 1,4-alpha-linked oligosaccharide from growing alpha-1,4-glucan chains and the subsequent attachment of the oligosaccharide to the alpha-1,6 position. The polypeptide is 1,4-alpha-glucan branching enzyme GlgB (Desulfitobacterium hafniense (strain Y51)).